A 134-amino-acid polypeptide reads, in one-letter code: Cytochrome b (134 aa).

Helical transmembrane passes span 33–53 (FGSL…FLAM), 77–98 (WLLR…YLHV), and 113–133 (WNVG…GYVL). Residues His-83 and His-97 each coordinate heme b.

The protein belongs to the cytochrome b family. The cytochrome bc1 complex contains 11 subunits: 3 respiratory subunits (MT-CYB, CYC1 and UQCRFS1), 2 core proteins (UQCRC1 and UQCRC2) and 6 low-molecular weight proteins (UQCRH/QCR6, UQCRB/QCR7, UQCRQ/QCR8, UQCR10/QCR9, UQCR11/QCR10 and a cleavage product of UQCRFS1). This cytochrome bc1 complex then forms a dimer. Heme b serves as cofactor.

The protein localises to the mitochondrion inner membrane. Component of the ubiquinol-cytochrome c reductase complex (complex III or cytochrome b-c1 complex) that is part of the mitochondrial respiratory chain. The b-c1 complex mediates electron transfer from ubiquinol to cytochrome c. Contributes to the generation of a proton gradient across the mitochondrial membrane that is then used for ATP synthesis. The protein is Cytochrome b (MT-CYB) of Chiroderma trinitatum (Little big-eyed bat).